Here is a 571-residue protein sequence, read N- to C-terminus: Protein EARLY STARVATION 1, chloroplastic (571 aa).

2 disordered regions span residues 142 to 162 (RHSSCSSQSLPQQQRRTKDAG) and 215 to 254 (GSYRGGPVHGANHIRPLQRPDSVHPQPLTSARPRRGTEHD). Positions 145 to 155 (SCSSQSLPQQQ) are enriched in low complexity.

This sequence belongs to the ESV1 family.

Its subcellular location is the plastid. The protein resides in the chloroplast stroma. Its function is as follows. Binds preferentially to highly ordered alpha-glucans, such as starch and crystalline maltodextrins. Involved in the organization of the starch granule matrix, thus influencing starch turnover by modulating the accessibility of starch polymers to modifying and degrading enzymes. Required for the control of starch degradation in leaves and starch distribution in nonphotosynthetic parts. Promotes gravitropic responses, negative in shoots but positive in roots, by facilitating starch granules (statoliths) formation in hypocotyls and roots columella. This Marchantia polymorpha (Common liverwort) protein is Protein EARLY STARVATION 1, chloroplastic.